Here is a 631-residue protein sequence, read N- to C-terminus: uncharacterized protein (631 aa).

An N-terminal signal peptide occupies residues 1-20 (MVRFVSILSLFGCAATLVTA). The Lumenal segment spans residues 21 to 105 (HDDMDMDMDM…AGNRSALRYH (85 aa)). N-linked (GlcNAc...) asparagine glycosylation is found at Asn87 and Asn98. A helical membrane pass occupies residues 106 to 126 (IITLLLVAFVLYPVSLALSAA). Over 127–131 (RSRWY) the chain is Cytoplasmic. The chain crosses the membrane as a helical span at residues 132-152 (LPLLFVNLCICISSVMALSVF). Over 153–170 (KNTFPEEDWYAHNIYGTT) the chain is Lumenal. A helical membrane pass occupies residues 171 to 191 (SVLLLVFMLVHFFAAVLSVPV). The Cytoplasmic portion of the chain corresponds to 192–322 (SLASKKEYRP…LSCVANVVFH (131 aa)). The interval 216–274 (MVNSARGSPSPSSNRDTLFSLSSDTTTATATNNNKRRRAEGEDEGDNTSNHDTLRDEDY) is disordered. The residue at position 219 (Ser219) is a Phosphoserine. A compositionally biased stretch (polar residues) spans 220-239 (ARGSPSPSSNRDTLFSLSSD). Residue Lys250 forms a Glycyl lysine isopeptide (Lys-Gly) (interchain with G-Cter in ubiquitin) linkage. A helical membrane pass occupies residues 323-343 (MLTYPLFMYIFVDLIIGFAVG). The Lumenal segment spans residues 344–351 (NLLGKGIR). The helical transmembrane segment at 352–372 (IFNLLAHWIKGGVFFTLGVVS) threads the bilayer. The Cytoplasmic portion of the chain corresponds to 373 to 407 (LARYCGFAAKYGWAWNNISFTSQLTQTRSSNLLFR). The helical transmembrane segment at 408–428 (FAPAGTFTMEFVESFLIFFYG) threads the bilayer. Residues 429 to 451 (STNIFLEHLAGNGGAWTAKDLQH) are Lumenal-facing. The chain crosses the membrane as a helical span at residues 452–472 (VSIAFMFIGTGLCGLLTEYKL). The Cytoplasmic portion of the chain corresponds to 473-529 (NHWRFEHARKRPQTDVVAATPGYSPNPFPAFTIFWTGILMSQHAQSSQFSTTIHTQW). Residues 530 to 550 (GYLLSYGSFFRLLTFLILFLV) traverse the membrane as a helical segment. Topologically, residues 551–598 (PNTNSAASKPFTELITSFCLLCGGLVFMESTDQSIEAMEYRGFTPMFT) are lumenal. The helical transmembrane segment at 599-619 (FNLSVGFVSLLMAWEMILFIW) threads the bilayer. The Cytoplasmic segment spans residues 620–631 (KDWLIKTRKTSL).

The protein to S.pombe SpBC3B8.06.

The protein resides in the membrane. This is an uncharacterized protein from Saccharomyces cerevisiae (strain ATCC 204508 / S288c) (Baker's yeast).